A 351-amino-acid chain; its full sequence is METNLDGCFERVEKTLGSMIDSLAKNNPSQKLAEELLAAEAELSKSLKLLETHQNNNARLQQLRQETSLHDTQLKDIMSSLWNMRRELKAVPTTSNPPPGPKHQFTTSELLAYARRISRNTLPLPGVTNGVDMTPTQFSASLTEPEDSFRLQFQPTQTQTPTNSFNLSFNGTVSTPIGLSAPTPTTTNDTQPSTQLPPSQQPPPKTAPADDKLPAHLKPAVNPLHDAAFHPWPTEGQIRTGALAALQRLVDAGIEPRGYDPAEQERRRVAEEKARREAEERARLEREEAERKGREERERMAREREAARLRNAGGADGDGERRESVAVARPKPKQFTFLGADDDEDDEDEDD.

A coiled-coil region spans residues 30–68; it reads QKLAEELLAAEAELSKSLKLLETHQNNNARLQQLRQETS. Disordered regions lie at residues 156-217 and 256-351; these read TQTQ…PAHL and PRGY…DEDD. Polar residues predominate over residues 163–177; the sequence is NSFNLSFNGTVSTPI. Over residues 182-198 the composition is skewed to low complexity; it reads PTPTTTNDTQPSTQLPP. The span at 257–308 shows a compositional bias: basic and acidic residues; sequence RGYDPAEQERRRVAEEKARREAEERARLEREEAERKGREERERMAREREAAR. A coiled-coil region spans residues 262–311; that stretch reads AEQERRRVAEEKARREAEERARLEREEAERKGREERERMAREREAARLRN. The segment covering 340–351 has biased composition (acidic residues); that stretch reads ADDDEDDEDEDD.

The protein belongs to the Mediator complex subunit 4 family. Component of the Mediator complex.

The protein localises to the nucleus. In terms of biological role, component of the Mediator complex, a coactivator involved in the regulated transcription of nearly all RNA polymerase II-dependent genes. Mediator functions as a bridge to convey information from gene-specific regulatory proteins to the basal RNA polymerase II transcription machinery. Mediator is recruited to promoters by direct interactions with regulatory proteins and serves as a scaffold for the assembly of a functional preinitiation complex with RNA polymerase II and the general transcription factors. This Chaetomium globosum (strain ATCC 6205 / CBS 148.51 / DSM 1962 / NBRC 6347 / NRRL 1970) (Soil fungus) protein is Mediator of RNA polymerase II transcription subunit 4 (MED4).